The following is an 89-amino-acid chain: MSDEKQELFEFPCRFPLKIMGERHDEFVTTITEVVRVHAPDLAEIDVVLRESSGGRFYALTVTVTATSRQQLDNIYLSLTGHPMVKMVL.

Belongs to the UPF0250 family.

The sequence is that of UPF0250 protein CV_3095 from Chromobacterium violaceum (strain ATCC 12472 / DSM 30191 / JCM 1249 / CCUG 213 / NBRC 12614 / NCIMB 9131 / NCTC 9757 / MK).